A 94-amino-acid chain; its full sequence is Neutrophil antibiotic peptide NP-1 (94 aa).

Residues 1–19 (MRTLTLLTALLLLALHTQA) form the signal peptide. The propeptide occupies 20-62 (KSPQGTAEEAPDQEQLVMEDQDISISFGGDKGTALQDADVKAG). Cystine bridges form between Cys-65-Cys-93, Cys-67-Cys-82, and Cys-72-Cys-92. At Tyr-84 the chain carries Phosphotyrosine.

The protein belongs to the alpha-defensin family. In terms of tissue distribution, highest expression in bone marrow and to a much lesser extent in small intestine.

The protein resides in the secreted. In terms of biological role, active in vitro against S.aureus, fungi, Gram-positive and Gram-negative bacteria and to a lesser extent against an enveloped virus. The protein is Neutrophil antibiotic peptide NP-1 of Rattus norvegicus (Rat).